Consider the following 31-residue polypeptide: Monocyclic monoterpene ketone monooxygenase (31 aa).

Residue Gly20–Gly25 coordinates FAD.

Monomer. It depends on FAD as a cofactor.

The enzyme catalyses 1-hydroxylimonen-2-one + NADPH + O2 = 3-isopropenyl-6-oxoheptanoate + NADP(+) + H2O. The catalysed reaction is (1R,4S)-1-hydroxylimonen-2-one + NADPH + O2 + H(+) = (4S,7S)-7-hydroxy-4-isopropenyl-7-methyloxepan-2-one + NADP(+) + H2O. It carries out the reaction (1S,4R)-1-hydroxylimonen-2-one + NADPH + O2 + H(+) = (4R,7R)-7-hydroxy-4-isopropenyl-7-methyloxepan-2-one + NADP(+) + H2O. It catalyses the reaction (1R,4R)-dihydrocarvone + NADPH + O2 + H(+) = (4R,7R)-4-isopropenyl-7-methyloxepan-2-one + NADP(+) + H2O. The enzyme catalyses (1S,4R)-menthone + NADPH + O2 + H(+) = (4S,7R)-7-isopropyl-4-methyloxepan-2-one + NADP(+) + H2O. The catalysed reaction is (1R,4S)-menthone + NADPH + O2 + H(+) = (4R,7S)-7-isopropyl-4-methyloxepan-2-one + NADP(+) + H2O. It carries out the reaction (1S,4R)-isodihydrocarvone + NADPH + O2 + H(+) = (3S,6R)-6-isopropenyl-3-methyloxepan-2-one + NADP(+) + H2O. It participates in terpene metabolism; monoterpene degradation. Its function is as follows. Catalyzes the NADPH- and oxygen-dependent oxidation of the monocyclic monoterpene ketones 1-hydroxy-2-oxolimonene, dihydrocarvone and menthone. Is able to convert all enantiomers of these natural substrates with almost equal efficiency. Is thus involved in the conversion of the monocyclic monoterpene ketone intermediates formed in the degradation pathways of all stereoisomers of three different monocyclic monoterpenes, i.e. limonene, (dihydro)carveol and menthol, which likely make R.erythropolis able to grow on these compounds as the sole source of carbon and energy. This chain is Monocyclic monoterpene ketone monooxygenase, found in Rhodococcus erythropolis (Arthrobacter picolinophilus).